A 493-amino-acid chain; its full sequence is Transcript termination protein A18 (493 aa).

One can recognise a Helicase ATP-binding domain in the interval 100-256 (MIELKRPLYI…NSIINIAKLS (157 aa)). ATP is bound at residue 113–120 (LACGFGKT). Positions 206-209 (DESH) match the DESH box motif.

Belongs to the helicase family. Poxviruses subfamily. Interacts with G2. Might be part of a transcription complex composed at least of G2, A18, and H5.

Its subcellular location is the virion. Functionally, DNA helicase which seems to act as a postreplicative transcription termination factor. Involved in ATP-dependent release of nascent RNA. Forms a stable complex with single-stranded DNA, and to a lesser extent RNA. The protein is Transcript termination protein A18 of Cowpox virus (strain GRI-90 / Grishak) (CPV).